The sequence spans 310 residues: Melanocyte-stimulating hormone receptor (310 aa).

The Extracellular portion of the chain corresponds to Met-1–Glu-37. Residue Asn-29 is glycosylated (N-linked (GlcNAc...) asparagine). The helical transmembrane segment at Leu-38–Ile-63 threads the bilayer. At Ala-64–Ser-72 the chain is on the cytoplasmic side. Residues Met-73–Leu-93 traverse the membrane as a helical segment. At Glu-94 to Asn-110 the chain is on the extracellular side. The chain crosses the membrane as a helical span at residues Thr-111–Val-132. Residues Asp-133–Arg-155 lie on the Cytoplasmic side of the membrane. A helical transmembrane segment spans residues Ala-156–Tyr-175. The Extracellular segment spans residues Asp-176 to Cys-183. The helical transmembrane segment at Leu-184–Leu-203 threads the bilayer. The Cytoplasmic portion of the chain corresponds to Ala-204–Ala-232. Residues Ala-233–Phe-258 form a helical membrane-spanning segment. Residues Cys-259–Asn-271 are Extracellular-facing. The helical transmembrane segment at Phe-272–Phe-292 threads the bilayer. Topologically, residues Arg-293–Trp-310 are cytoplasmic.

Belongs to the G-protein coupled receptor 1 family. Interacts with MGRN1, but does not undergo MGRN1-mediated ubiquitination; this interaction competes with GNAS-binding and thus inhibits agonist-induced cAMP production. Interacts with OPN3; the interaction results in a decrease in MC1R-mediated cAMP signaling and ultimately a decrease in melanin production in melanocytes.

Its subcellular location is the cell membrane. Functionally, receptor for MSH (alpha, beta and gamma) and ACTH. The activity of this receptor is mediated by G proteins which activate adenylate cyclase. Mediates melanogenesis, the production of eumelanin (black/brown) and phaeomelanin (red/yellow), via regulation of cAMP signaling in melanocytes. In Leontopithecus chrysomelas (Golden-headed lion tamarin), this protein is Melanocyte-stimulating hormone receptor (MC1R).